Reading from the N-terminus, the 486-residue chain is Probable glycine dehydrogenase (decarboxylating) subunit 2 (486 aa).

Position 269 is an N6-(pyridoxal phosphate)lysine (K269).

It belongs to the GcvP family. C-terminal subunit subfamily. The glycine cleavage system is composed of four proteins: P, T, L and H. In this organism, the P 'protein' is a heterodimer of two subunits. Pyridoxal 5'-phosphate is required as a cofactor.

It catalyses the reaction N(6)-[(R)-lipoyl]-L-lysyl-[glycine-cleavage complex H protein] + glycine + H(+) = N(6)-[(R)-S(8)-aminomethyldihydrolipoyl]-L-lysyl-[glycine-cleavage complex H protein] + CO2. Its function is as follows. The glycine cleavage system catalyzes the degradation of glycine. The P protein binds the alpha-amino group of glycine through its pyridoxal phosphate cofactor; CO(2) is released and the remaining methylamine moiety is then transferred to the lipoamide cofactor of the H protein. This is Probable glycine dehydrogenase (decarboxylating) subunit 2 from Chlorobium phaeobacteroides (strain DSM 266 / SMG 266 / 2430).